Reading from the N-terminus, the 23-residue chain is Cytochrome c oxidase subunit 7A-liver, mitochondrial (23 aa).

This sequence belongs to the cytochrome c oxidase VIIa family. In terms of assembly, component of the cytochrome c oxidase (complex IV, CIV), a multisubunit enzyme composed of 14 subunits. The complex is composed of a catalytic core of 3 subunits MT-CO1, MT-CO2 and MT-CO3, encoded in the mitochondrial DNA, and 11 supernumerary subunits COX4I, COX5A, COX5B, COX6A, COX6B, COX6C, COX7A, COX7B, COX7C, COX8 and NDUFA4, which are encoded in the nuclear genome. The complex exists as a monomer or a dimer and forms supercomplexes (SCs) in the inner mitochondrial membrane with NADH-ubiquinone oxidoreductase (complex I, CI) and ubiquinol-cytochrome c oxidoreductase (cytochrome b-c1 complex, complex III, CIII), resulting in different assemblies (supercomplex SCI(1)III(2)IV(1) and megacomplex MCI(2)III(2)IV(2)).

Its subcellular location is the mitochondrion inner membrane. It functions in the pathway energy metabolism; oxidative phosphorylation. Component of the cytochrome c oxidase, the last enzyme in the mitochondrial electron transport chain which drives oxidative phosphorylation. The respiratory chain contains 3 multisubunit complexes succinate dehydrogenase (complex II, CII), ubiquinol-cytochrome c oxidoreductase (cytochrome b-c1 complex, complex III, CIII) and cytochrome c oxidase (complex IV, CIV), that cooperate to transfer electrons derived from NADH and succinate to molecular oxygen, creating an electrochemical gradient over the inner membrane that drives transmembrane transport and the ATP synthase. Cytochrome c oxidase is the component of the respiratory chain that catalyzes the reduction of oxygen to water. Electrons originating from reduced cytochrome c in the intermembrane space (IMS) are transferred via the dinuclear copper A center (CU(A)) of subunit 2 and heme A of subunit 1 to the active site in subunit 1, a binuclear center (BNC) formed by heme A3 and copper B (CU(B)). The BNC reduces molecular oxygen to 2 water molecules using 4 electrons from cytochrome c in the IMS and 4 protons from the mitochondrial matrix. This chain is Cytochrome c oxidase subunit 7A-liver, mitochondrial, found in Oncorhynchus mykiss (Rainbow trout).